The sequence spans 432 residues: Trigger factor (432 aa).

One can recognise a PPIase FKBP-type domain in the interval 161–246 (GTRATINFVG…VVKVEARELP (86 aa)).

It belongs to the FKBP-type PPIase family. Tig subfamily.

The protein localises to the cytoplasm. It catalyses the reaction [protein]-peptidylproline (omega=180) = [protein]-peptidylproline (omega=0). Its function is as follows. Involved in protein export. Acts as a chaperone by maintaining the newly synthesized protein in an open conformation. Functions as a peptidyl-prolyl cis-trans isomerase. The sequence is that of Trigger factor from Aliivibrio fischeri (strain MJ11) (Vibrio fischeri).